A 63-amino-acid chain; its full sequence is Large ribosomal subunit protein uL29 (63 aa).

The protein belongs to the universal ribosomal protein uL29 family.

The protein is Large ribosomal subunit protein uL29 (rpmC) of Buchnera aphidicola subsp. Acyrthosiphon kondoi (Acyrthosiphon kondoi symbiotic bacterium).